The chain runs to 460 residues: Sexual development regulator velC (460 aa).

Disordered regions lie at residues 67-131 (VGPD…PQAP), 152-216 (YAPR…RPDP), and 422-460 (KKGN…SARQ). The segment covering 192–207 (PVTTNGRPPDSNSPMV) has biased composition (polar residues). The Velvet domain maps to 239–422 (LSDNRFNLQI…KEQGCIISIK (184 aa)). Over residues 423-437 (KGNDRSKNTRSHDDS) the composition is skewed to basic and acidic residues. Residues 451–460 (GKRRRRSARQ) show a composition bias toward basic residues.

The protein belongs to the velvet family. VelC subfamily. Interacts with VE1.

The protein resides in the nucleus. Its function is as follows. Velvet-domain-containing protein that acts as a positive regulator of sexual development. Dispensable for regulation of conidial size, hyphal hydrophobicity, fumonisin production, and oxidant resistance. This Gibberella moniliformis (strain M3125 / FGSC 7600) (Maize ear and stalk rot fungus) protein is Sexual development regulator velC.